Consider the following 447-residue polypeptide: Probable ethanolamine kinase B (447 aa).

Residues 178–208 (STTISTSTSTSTSTSSTSPSTSPSLENSTLS) are compositionally biased toward low complexity. Positions 178–217 (STTISTSTSTSTSTSSTSPSTSPSLENSTLSPRNMNTQTS) are disordered.

This sequence belongs to the choline/ethanolamine kinase family.

The protein localises to the cytoplasm. It catalyses the reaction ethanolamine + ATP = phosphoethanolamine + ADP + H(+). Its pathway is phospholipid metabolism; phosphatidylethanolamine biosynthesis; phosphatidylethanolamine from ethanolamine: step 1/3. In terms of biological role, highly specific for ethanolamine phosphorylation. May be a rate-controlling step in phosphatidylethanolamine biosynthesis. The polypeptide is Probable ethanolamine kinase B (etnkB) (Dictyostelium discoideum (Social amoeba)).